A 262-amino-acid chain; its full sequence is MVLIRVLANLLILQLSYAQKSSELVIGGDECNINEHRSLALVYITSGFLCGGTLINKEWVLTAAHCDRGDILVLLGVHRLKDVQTGVSKDVQTRVAKEKFICPNRKKDDEKDKDIMLIRMDSPVNISTHIAPLSLPSNPPSVGSVCRIMGWGAITSPNVTLPGVPHCADINIFDYEVCRAAKPELPVTSRTLCAGILEGGKGSCDGDSGGPLICNGEIQGIVSWGGDICAQPREPEPYTKVFDYTEWIQSIIAGNTDATCPP.

Positions Met1–Ala18 are cleaved as a signal peptide. Residues Gln19–Leu24 constitute a propeptide that is removed on maturation. The 229-residue stretch at Val25–Ala253 folds into the Peptidase S1 domain. 6 disulfide bridges follow: Cys31-Cys167, Cys50-Cys66, Cys102-Cys260, Cys146-Cys214, Cys178-Cys193, and Cys204-Cys229. Residues His65 and Asp114 each act as charge relay system in the active site. Residues Asn125 and Asn158 are each glycosylated (N-linked (GlcNAc...) asparagine). Catalysis depends on Ser208, which acts as the Charge relay system.

This sequence belongs to the peptidase S1 family. Snake venom subfamily. In terms of assembly, monomer. In terms of tissue distribution, expressed by the venom gland.

The protein resides in the secreted. In terms of biological role, snake venom serine protease that may act in the hemostasis system of the prey. This Crotalus durissus durissus (Central American rattlesnake) protein is Snake venom serine protease.